The chain runs to 136 residues: Large ribosomal subunit protein uL16 (136 aa).

Belongs to the universal ribosomal protein uL16 family. In terms of assembly, part of the 50S ribosomal subunit.

In terms of biological role, binds 23S rRNA and is also seen to make contacts with the A and possibly P site tRNAs. The chain is Large ribosomal subunit protein uL16 from Proteus mirabilis (strain HI4320).